The sequence spans 225 residues: Receptor-transporting protein 2 (225 aa).

Residues 1–196 (MCTSLTTCEW…RAQAGSGYNF (196 aa)) lie on the Cytoplasmic side of the membrane. The 3CxxC-type zinc finger occupies 52-161 (ASGRFHCSWC…AEFCEACQEG (110 aa)). A helical transmembrane segment spans residues 197–219 (LSLRWCLFWASLCLLVVYLQFSF). At 220–225 (LSPAFF) the chain is on the extracellular side.

Belongs to the TMEM7 family. In terms of assembly, interacts with olfactory receptors. In terms of tissue distribution, expressed in circumvallate papillae and testis.

Its subcellular location is the cell membrane. Specifically promotes functional cell surface expression of olfactory receptors, but not of other GPCRs. This is Receptor-transporting protein 2 (RTP2) from Homo sapiens (Human).